Reading from the N-terminus, the 423-residue chain is UPF0229 protein Pfl01_5140 (423 aa).

Residues 83 to 108 (TAGEHIARPPGGGGGRGPGKAGNSGE) form a disordered region. Residues 92–107 (PGGGGGRGPGKAGNSG) show a composition bias toward gly residues.

The protein belongs to the UPF0229 family.

The sequence is that of UPF0229 protein Pfl01_5140 from Pseudomonas fluorescens (strain Pf0-1).